The sequence spans 235 residues: Germin-like protein 1-4 (235 aa).

The first 27 residues, 1-27, serve as a signal peptide directing secretion; it reads MAAKLPTVVLLASFAAVILSLAAPLLA. Cysteines 37 and 55 form a disulfide. N60 carries N-linked (GlcNAc...) asparagine glycosylation. The Cupin type-1 domain maps to 69–226; that stretch reads PGLGKPADVY…AFQVDGGVVE (158 aa). Residues H120, H122, E127, and H171 each contribute to the Mn(2+) site.

This sequence belongs to the germin family. Oligomer (believed to be a pentamer but probably hexamer).

The protein localises to the secreted. Its subcellular location is the extracellular space. It is found in the apoplast. Functionally, may play a role in plant defense. Probably has no oxalate oxidase activity even if the active site is conserved. In Oryza sativa subsp. japonica (Rice), this protein is Germin-like protein 1-4.